The sequence spans 98 residues: NADH-ubiquinone oxidoreductase chain 4L (98 aa).

The next 3 helical transmembrane spans lie at 1 to 21, 29 to 49, and 59 to 79; these read MLPI…GVLI, TLLC…LMIT, and IPLI…ALLV.

Belongs to the complex I subunit 4L family. In terms of assembly, core subunit of respiratory chain NADH dehydrogenase (Complex I) which is composed of 45 different subunits.

The protein localises to the mitochondrion inner membrane. The catalysed reaction is a ubiquinone + NADH + 5 H(+)(in) = a ubiquinol + NAD(+) + 4 H(+)(out). Its function is as follows. Core subunit of the mitochondrial membrane respiratory chain NADH dehydrogenase (Complex I) which catalyzes electron transfer from NADH through the respiratory chain, using ubiquinone as an electron acceptor. Part of the enzyme membrane arm which is embedded in the lipid bilayer and involved in proton translocation. The sequence is that of NADH-ubiquinone oxidoreductase chain 4L (MT-ND4L) from Phascogale tapoatafa (Common wambenger).